The following is a 429-amino-acid chain: Endoglucanase A (429 aa).

Positions methionine 1–arginine 34 are cleaved as a signal peptide. The segment covering alanine 46–glutamate 94 has biased composition (basic and acidic residues). A disordered region spans residues alanine 46–proline 100. The Proton donor role is filled by glutamate 249. Glutamate 334 acts as the Nucleophile in catalysis.

This sequence belongs to the glycosyl hydrolase 5 (cellulase A) family.

It catalyses the reaction Endohydrolysis of (1-&gt;4)-beta-D-glucosidic linkages in cellulose, lichenin and cereal beta-D-glucans.. The polypeptide is Endoglucanase A (celA) (Butyrivibrio fibrisolvens).